Reading from the N-terminus, the 325-residue chain is Probable 4-hydroxy-tetrahydrodipicolinate reductase 2, chloroplastic (325 aa).

Residues 1 to 32 constitute a chloroplast transit peptide; it reads MLSLRPPCTLSPAPWRRRRTLHGAAGTPQRVS. Residues 57-62, 149-151, and 172-175 each bind NAD(+); these read GCTGKM, GTT, and SPQM. Catalysis depends on His208, which acts as the Proton donor/acceptor. Catalysis depends on Lys212, which acts as the Proton donor. 217-218 serves as a coordination point for (S)-2,3,4,5-tetrahydrodipicolinate; that stretch reads GT.

Belongs to the DapB family.

The protein resides in the plastid. Its subcellular location is the chloroplast. It carries out the reaction (S)-2,3,4,5-tetrahydrodipicolinate + NAD(+) + H2O = (2S,4S)-4-hydroxy-2,3,4,5-tetrahydrodipicolinate + NADH + H(+). It catalyses the reaction (S)-2,3,4,5-tetrahydrodipicolinate + NADP(+) + H2O = (2S,4S)-4-hydroxy-2,3,4,5-tetrahydrodipicolinate + NADPH + H(+). It participates in amino-acid biosynthesis; L-lysine biosynthesis via DAP pathway; (S)-tetrahydrodipicolinate from L-aspartate: step 4/4. Its function is as follows. Catalyzes the conversion of 4-hydroxy-tetrahydrodipicolinate (HTPA) to tetrahydrodipicolinate. This is Probable 4-hydroxy-tetrahydrodipicolinate reductase 2, chloroplastic (DAPB2) from Oryza sativa subsp. japonica (Rice).